We begin with the raw amino-acid sequence, 695 residues long: Threonine--tRNA ligase 1, cytoplasmic (695 aa).

The interval 1 to 21 is disordered; sequence MSEEKASSPSGKMDGEKPLNP. The region spanning 51-115 is the TGS domain; sequence DSKPIKVTLP…ETDCTLELLK (65 aa). Lysine 215 carries the N6-acetyllysine modification. Residue threonine 218 is modified to Phosphothreonine. A Phosphotyrosine modification is found at tyrosine 270. A Phosphothreonine modification is found at threonine 425.

The protein belongs to the class-II aminoacyl-tRNA synthetase family. As to quaternary structure, homodimer. In terms of processing, ISGylated.

It is found in the cytoplasm. The catalysed reaction is tRNA(Thr) + L-threonine + ATP = L-threonyl-tRNA(Thr) + AMP + diphosphate + H(+). Its function is as follows. Catalyzes the attachment of threonine to tRNA(Thr) in a two-step reaction: threonine is first activated by ATP to form Thr-AMP and then transferred to the acceptor end of tRNA(Thr). Also edits incorrectly charged tRNA(Thr) via its editing domain, at the post-transfer stage. The protein is Threonine--tRNA ligase 1, cytoplasmic (Tars1) of Rattus norvegicus (Rat).